The following is a 475-amino-acid chain: Aspartic proteinase 39 (475 aa).

The N-terminal stretch at 1-23 (MELRRKLCIVVAVFVIVIEFASA) is a signal peptide. The Peptidase A1 domain occupies 74-422 (YFTKIKLGSP…DLDNEVIGWA (349 aa)). Residue Asp-92 is part of the active site. Residues Asn-124 and Asn-222 are each glycosylated (N-linked (GlcNAc...) asparagine). The active site involves Asp-303. N-linked (GlcNAc...) asparagine glycans are attached at residues Asn-425 and Asn-446. A lipid anchor (GPI-anchor amidated serine) is attached at Ser-449. A propeptide spans 450–475 (APRLLMITKLLTILSPLIVMAFTSLA) (removed in mature form).

Belongs to the peptidase A1 family. As to expression, highly expressed in pollen and pollen tubes. Mostly expressed in inflorescence, flowers and siliques, and barely in leaves and seedlings.

Its subcellular location is the cell membrane. The protein resides in the cytoplasm. The protein localises to the cytosol. Its function is as follows. Displays aspartic proteolytic activity. Together with A36, contributes to pollen and ovule development, including the apical cell wall constitution of the growing pollen tubes. This chain is Aspartic proteinase 39, found in Arabidopsis thaliana (Mouse-ear cress).